A 326-amino-acid chain; its full sequence is Aldo-keto reductase family 1 member D1 (326 aa).

Residues 22–26 and Asp53 each bind NADP(+); that span reads GLGTY. Tyr26 is a substrate binding site. Residues Tyr58, Trp89, Glu120, and Tyr132 each coordinate substrate. The Proton donor role is filled by Tyr58. NADP(+) is bound by residues 169–170, Gln193, and 219–224; these read SN and YSPLGT. Residue Trp230 coordinates substrate. 273 to 283 serves as a coordination point for NADP(+); that stretch reads KSFNPERIKEN.

Belongs to the aldo/keto reductase family.

The protein resides in the cytoplasm. The enzyme catalyses 5beta-cholestan-3-one + NADP(+) = cholest-4-en-3-one + NADPH + H(+). The catalysed reaction is 4,5beta-dihydrocortisone + NADP(+) = cortisone + NADPH + H(+). It carries out the reaction cortisol + NADPH + H(+) = 5beta-dihydrocortisol + NADP(+). It catalyses the reaction corticosterone + NADPH + H(+) = 5beta-dihydrocorticosterone + NADP(+). The enzyme catalyses 7alpha,12alpha-dihydroxycholest-4-en-3-one + NADPH + H(+) = 7alpha,12alpha-dihydroxy-5beta-cholestan-3-one + NADP(+). The catalysed reaction is 7alpha-hydroxycholest-4-en-3-one + NADPH + H(+) = 7alpha-hydroxy-5beta-cholestan-3-one + NADP(+). It carries out the reaction epitestosterone + NADPH + H(+) = 5beta-dihydroepitestosterone + NADP(+). It catalyses the reaction androst-4-ene-3,17-dione + NADPH + H(+) = 5beta-androstane-3,17-dione + NADP(+). The enzyme catalyses progesterone + NADPH + H(+) = 5beta-pregnan-3,20-dione + NADP(+). The catalysed reaction is 21-hydroxyprogesterone + NADPH + H(+) = 5beta-dihydrodeoxycorticosterone + NADP(+). It carries out the reaction aldosterone + NADPH + H(+) = 5beta-dihydroaldosterone + NADP(+). It catalyses the reaction 17beta-hydroxyandrosta-1,4-dien-3-one + NADPH + H(+) = 17beta-hydroxy-5beta-androst-1-en-3-one + NADP(+). The enzyme catalyses 17beta-hydroxyestr-4-en-3-one + NADPH + H(+) = 17beta-hydroxy-5beta-estran-3-one + NADP(+). The catalysed reaction is 5beta-dihydrotestosterone + NADP(+) = testosterone + NADPH + H(+). It carries out the reaction androst-4-ene-3,11,17-trione + NADPH + H(+) = 17beta-hydroxyandrost-4-ene-3,11-dione + NADP(+). Subject to inhibition by high substrate concentrations. Inhibited by testosterone concentrations above 10 uM. Inhibited by the primary and secondary bile acids chenodeoxycholic acid and ursodeoxycholic acid. Catalyzes the stereospecific NADPH-dependent reduction of the C4-C5 double bond of bile acid intermediates and steroid hormones carrying a delta(4)-3-one structure to yield an A/B cis-ring junction. This cis-configuration is crucial for bile acid biosynthesis and plays important roles in steroid metabolism. Capable of reducing a broad range of delta-(4)-3-ketosteroids from C18 (such as, 17beta-hydroxyestr-4-en-3-one) to C27 (such as, 7alpha-hydroxycholest-4-en-3-one). The polypeptide is Aldo-keto reductase family 1 member D1 (AKR1D1) (Oryctolagus cuniculus (Rabbit)).